A 182-amino-acid polypeptide reads, in one-letter code: Urease accessory protein UreE (182 aa).

Residues 128 to 182 (PRTEPFRPEGGAYGHGRTLGHDHGPAQGHGHDHPHVHVHISHKPDEDETPDADPA) form a disordered region. A compositionally biased stretch (basic and acidic residues) spans 146–162 (LGHDHGPAQGHGHDHPH). Positions 173–182 (EDETPDADPA) are enriched in acidic residues.

This sequence belongs to the UreE family.

The protein resides in the cytoplasm. Functionally, involved in urease metallocenter assembly. Binds nickel. Probably functions as a nickel donor during metallocenter assembly. This chain is Urease accessory protein UreE, found in Cereibacter sphaeroides (strain ATCC 17023 / DSM 158 / JCM 6121 / CCUG 31486 / LMG 2827 / NBRC 12203 / NCIMB 8253 / ATH 2.4.1.) (Rhodobacter sphaeroides).